A 214-amino-acid polypeptide reads, in one-letter code: Adenylate kinase (214 aa).

14 to 19 (GSGKGT) is an ATP binding site. An NMP region spans residues 34-63 (SSGDLFRSAIKSATPLGSKAAEYINKGLLV). AMP-binding positions include Ser35, Arg40, 61–63 (LLV), 89–92 (GFPR), and Gln96. Residues 130 to 163 (SRFICPACNYVYNQSQGFKECPTCHVALIRRSDD) are LID. ATP is bound at residue Arg131. Positions 134 and 137 each coordinate Zn(2+). ATP is bound at residue 140–141 (VY). Zn(2+) contacts are provided by Cys150 and Cys153. AMP-binding residues include Arg160 and Arg171. Thr199 is an ATP binding site.

It belongs to the adenylate kinase family. In terms of assembly, monomer.

It localises to the cytoplasm. It carries out the reaction AMP + ATP = 2 ADP. Its pathway is purine metabolism; AMP biosynthesis via salvage pathway; AMP from ADP: step 1/1. Catalyzes the reversible transfer of the terminal phosphate group between ATP and AMP. Plays an important role in cellular energy homeostasis and in adenine nucleotide metabolism. The polypeptide is Adenylate kinase (Chlamydia caviae (strain ATCC VR-813 / DSM 19441 / 03DC25 / GPIC) (Chlamydophila caviae)).